Consider the following 802-residue polypeptide: Ras GTPase-activating protein 4 (802 aa).

C2 domains are found at residues 1 to 105 and 116 to 232; these read MAKR…SGWT and VQGE…EGWF. 12 residues coordinate Ca(2+): Asp21, Asp27, Asp74, Asp76, Ser79, Asp82, Asp149, Asp155, Asp202, Asp204, Ser207, and Asp210. Residues 317–545 enclose the Ras-GAP domain; the sequence is GLAKDFLDLL…AQLKDFIMKL (229 aa). The region spanning 565-672 is the PH domain; sequence PPVKEGPLFI…WLSALRKAST (108 aa). A Btk-type zinc finger spans residues 674 to 710; the sequence is NRGLLRSYHPGIFRGDKWSCCHQKDKTDQGCDKTHSR. Residues His682, Cys693, Cys694, and Cys704 each coordinate Zn(2+).

It depends on Ca(2+) as a cofactor. Isoform 2 is expressed in osteoblasts.

The protein localises to the cytoplasm. Its subcellular location is the cytosol. It localises to the cell membrane. In terms of biological role, ca(2+)-dependent Ras GTPase-activating protein, that switches off the Ras-MAPK pathway following a stimulus that elevates intracellular calcium. Functions as an adaptor for Cdc42 and Rac1 during FcR-mediated phagocytosis. Isoform 2 activates the Ras pathway and promotes RANKL shedding by modulating the expression of MMP14. The protein is Ras GTPase-activating protein 4 (Rasa4) of Mus musculus (Mouse).